The sequence spans 219 residues: Pyridoxine/pyridoxamine 5'-phosphate oxidase (219 aa).

Substrate contacts are provided by residues 15–18 and Lys-73; that span reads RRDY. Residues 68-73, 83-84, Arg-89, Lys-90, and Gln-112 contribute to the FMN site; these read RMVLLK and YT. Positions 130, 134, and 138 each coordinate substrate. Residues 147–148 and Trp-192 each bind FMN; that span reads QS. 198 to 200 contributes to the substrate binding site; it reads RLH. Position 202 (Arg-202) interacts with FMN.

It belongs to the pyridoxamine 5'-phosphate oxidase family. As to quaternary structure, homodimer. FMN serves as cofactor.

It carries out the reaction pyridoxamine 5'-phosphate + O2 + H2O = pyridoxal 5'-phosphate + H2O2 + NH4(+). It catalyses the reaction pyridoxine 5'-phosphate + O2 = pyridoxal 5'-phosphate + H2O2. It functions in the pathway cofactor metabolism; pyridoxal 5'-phosphate salvage; pyridoxal 5'-phosphate from pyridoxamine 5'-phosphate: step 1/1. Its pathway is cofactor metabolism; pyridoxal 5'-phosphate salvage; pyridoxal 5'-phosphate from pyridoxine 5'-phosphate: step 1/1. Catalyzes the oxidation of either pyridoxine 5'-phosphate (PNP) or pyridoxamine 5'-phosphate (PMP) into pyridoxal 5'-phosphate (PLP). The protein is Pyridoxine/pyridoxamine 5'-phosphate oxidase of Acaryochloris marina (strain MBIC 11017).